The chain runs to 601 residues: RNA-binding protein MEX3B (601 aa).

Disordered stretches follow at residues 1 to 39 (MPSS…DDQR) and 90 to 109 (GRQG…ISPT). Serine 4 bears the Phosphoserine mark. Positions 13 to 33 (GSGGGGGGGGGGGGGGSGGGE) are enriched in gly residues. 2 KH domains span residues 98 to 159 (DGDR…RREI) and 192 to 253 (QTTI…REEI). Disordered regions lie at residues 284–332 (LHHG…TDSY) and 344–448 (TSRL…GGAS). Phosphoserine is present on serine 320. Composition is skewed to low complexity over residues 320 to 331 (SSSSLGSASTDS) and 362 to 371 (NGNNNNNGNG). Pro residues predominate over residues 395 to 404 (DPAPAPPPGT). Over residues 420-442 (AAPVSSSCSSSASSSASSSSVVF) the composition is skewed to low complexity. At serine 494 the chain carries Phosphoserine. The segment at 514 to 546 (LPGLPSSDTSGSSSSSSSSSSSSSSSSGLRRKG) is disordered. The span at 519–540 (SSDTSGSSSSSSSSSSSSSSSS) shows a compositional bias: low complexity. The RING-type zinc-finger motif lies at 550–590 (CSVCFESEVIAALVPCGHNLFCMECANRICEKSEPECPVCH).

In terms of processing, phosphorylation at Ser-494 creates a docking site for 14-3-3, which stabilizes the protein and modulates its ability to bind RNA.

The protein localises to the cytoplasm. It is found in the nucleus. Its subcellular location is the P-body. It localises to the cytoplasmic granule. RNA-binding protein. May be involved in post-transcriptional regulatory mechanisms. The protein is RNA-binding protein MEX3B (Mex3b) of Mus musculus (Mouse).